A 312-amino-acid chain; its full sequence is Transcription factor Ouib (312 aa).

A ZAD domain is found at 4 to 79 (IVCRVCGRQK…IKTQTKWLTI (76 aa)). Cys-6, Cys-9, Cys-52, and Cys-55 together coordinate Zn(2+). C2H2-type zinc fingers lie at residues 167–189 (YICE…MRKH), 195–217 (FGCK…HRVH), 223–245 (FACR…ERTH), 251–273 (YVCE…MVIH), and 279–303 (FRCD…SMMH).

In terms of tissue distribution, expressed predominantly in the prothoracic gland during embryonic and larval development.

The protein localises to the nucleus. Transcription factor required for ecdysteroid production in the prothoracic gland by activating transcription of the ecdysteroid biosynthesis gene spok. Binds to the 5'-AGCTTTATTATTTAG-3' DNA sequence in the spok enhancer region. The protein is Transcription factor Ouib of Drosophila melanogaster (Fruit fly).